Consider the following 100-residue polypeptide: NADH-quinone oxidoreductase subunit K (100 aa).

A run of 3 helical transmembrane segments spans residues 2 to 22 (IGLSHYLIVSALIFSIGLMGV), 29 to 49 (LMLFFATEVMLNAVNIAFAAI), and 63 to 83 (FFIIAIAASEVAVGLGILIVL).

Belongs to the complex I subunit 4L family. In terms of assembly, NDH-1 is composed of 14 different subunits. Subunits NuoA, H, J, K, L, M, N constitute the membrane sector of the complex.

The protein localises to the cell inner membrane. The enzyme catalyses a quinone + NADH + 5 H(+)(in) = a quinol + NAD(+) + 4 H(+)(out). Its function is as follows. NDH-1 shuttles electrons from NADH, via FMN and iron-sulfur (Fe-S) centers, to quinones in the respiratory chain. The immediate electron acceptor for the enzyme in this species is believed to be ubiquinone. Couples the redox reaction to proton translocation (for every two electrons transferred, four hydrogen ions are translocated across the cytoplasmic membrane), and thus conserves the redox energy in a proton gradient. This Sulfurovum sp. (strain NBC37-1) protein is NADH-quinone oxidoreductase subunit K.